The primary structure comprises 662 residues: Glycogen debranching enzyme (662 aa).

Asp-338 serves as the catalytic Nucleophile. Glu-373 (proton donor) is an active-site residue.

Belongs to the glycosyl hydrolase 13 family.

The catalysed reaction is Hydrolysis of (1-&gt;6)-alpha-D-glucosidic linkages to branches with degrees of polymerization of three or four glucose residues in limit dextrin.. Its pathway is glycan degradation; glycogen degradation. Its function is as follows. Removes maltotriose and maltotetraose chains that are attached by 1,6-alpha-linkage to the limit dextrin main chain, generating a debranched limit dextrin. In Yersinia pseudotuberculosis serotype I (strain IP32953), this protein is Glycogen debranching enzyme.